Here is a 91-residue protein sequence, read N- to C-terminus: MNTLKIYALMKKHKLIREPEKADDYLLQKLDREIELIEHGPLFAKKVTAQISDHDKELVDFIFSLIKEECYKESYTFEKITDCLMKFEEKI.

This is an uncharacterized protein from Acidianus convivator (ABV).